The following is a 342-amino-acid chain: viral G-protein coupled receptor (342 aa).

The Extracellular portion of the chain corresponds to 1-51 (MAAEDFLTIFLDDDESWNETLNMSGYDYSGNFSLEVSVCEMTTVVPYTWNV). N-linked (GlcNAc...) asparagine; by host glycosylation is found at asparagine 18, asparagine 22, and asparagine 31. The chain crosses the membrane as a helical span at residues 52–72 (GILSLIFLINVLGNGLVTYIF). Topologically, residues 73 to 92 (CKHRSRAGAIDILLLGICLN) are cytoplasmic. The helical transmembrane segment at 93-113 (SLCLSISLLAEVLMFLFPNII) threads the bilayer. Residues 114–121 (STGLCRLE) lie on the Extracellular side of the membrane. The helical transmembrane segment at 122–142 (IFFYYLYVYLDIFSVVCVSLV) threads the bilayer. The Cytoplasmic segment spans residues 143 to 159 (RYLLVAYSTRSWPKKQS). A helical transmembrane segment spans residues 160-180 (LGWVLTSAALLIALVLSGDAC). The Extracellular segment spans residues 181–217 (RHRSRVVDPVSKQAMCYENAGNMTADWRLHVRTVSVT). Residues 218 to 238 (AGFLLPLALLILFYALTWCVV) form a helical membrane-spanning segment. Topologically, residues 239–251 (RRTKLQARRKVRG) are cytoplasmic. Residues 252 to 272 (VIVAVVLLFFVFCFPYHVLNL) traverse the membrane as a helical segment. Topologically, residues 273 to 293 (LDTLLRRRWIRDSCYTRGLIN) are extracellular. Residues 294–314 (VGLAVTSLLQALYSAVVPLIY) traverse the membrane as a helical segment. Topologically, residues 315 to 342 (SCLGSLFRQRMYGLFQSLRQSFMSGATT) are cytoplasmic.

Belongs to the G-protein coupled receptor 1 family. In terms of assembly, interacts with protein K7; this interaction promotes vGPCR proteasomal degradation. Interacts with host CADM1; this interaction is essential for chronic NF-kappa-B activation.

It localises to the host cell membrane. Functionally, receptor that signals constitutively via several signaling pathways including PI3K/AKT as well as mitogen- and stress-activated/MAP kinases. Promotes host cell proliferation and survival, modulates cell migration, stimulates angiogenesis, and recruits inflammatory cells, both in expressing cells and in neighboring cells. Maintains chronic activation of NF-kappa-B via interaction with host CADM1. The chain is viral G-protein coupled receptor (ORF74) from Human herpesvirus 8 type P (isolate GK18) (HHV-8).